The chain runs to 177 residues: Nucleoside triphosphate/diphosphate phosphatase (177 aa).

Catalysis depends on arginine 23, which acts as the Proton donor. Mg(2+) contacts are provided by asparagine 87, aspartate 103, aspartate 105, aspartate 107, aspartate 120, and glutamate 123.

Belongs to the Ntdp family. Requires Mg(2+) as cofactor.

The enzyme catalyses a ribonucleoside 5'-triphosphate + H2O = a ribonucleoside 5'-diphosphate + phosphate + H(+). It carries out the reaction a ribonucleoside 5'-diphosphate + H2O = a ribonucleoside 5'-phosphate + phosphate + H(+). Its function is as follows. Has nucleoside phosphatase activity towards nucleoside triphosphates and nucleoside diphosphates. The sequence is that of Nucleoside triphosphate/diphosphate phosphatase from Streptococcus mutans serotype c (strain ATCC 700610 / UA159).